The sequence spans 348 residues: Protein RecA (348 aa).

An ATP-binding site is contributed by 65-72; sequence GPESSGKT. Residues 328 to 348 are disordered; the sequence is SKPQAETSARLATQEELADDY.

The protein belongs to the RecA family.

The protein localises to the cytoplasm. In terms of biological role, can catalyze the hydrolysis of ATP in the presence of single-stranded DNA, the ATP-dependent uptake of single-stranded DNA by duplex DNA, and the ATP-dependent hybridization of homologous single-stranded DNAs. It interacts with LexA causing its activation and leading to its autocatalytic cleavage. The chain is Protein RecA from Ectopseudomonas oleovorans (Pseudomonas oleovorans).